The primary structure comprises 304 residues: MKVVVNERRCFGSGQCVLVAPEVFEQSNDGTVTLLVDKPSPDNHSLVRAAARSCPATAIRFEENAMRQEPTEFSYDDLPALISRMRGDERHSFSSSSTMDVLWVLYDEIPNVSPESPDDDDRDRFLLSKGHGPMAYYAVLAAKGFLRPELLDTWATKNSPLGFAPDRTKISGVEMSGGSLGHGLPLAVGVAMGLRIQNRHAPRVFVLIGDGEFDEGSNHEAMAFAGRARLNQLTVIVLDNGTASMGWPHGIDKRFDGEGWDTININGADHEEIAAALNRDHNDRPLAVVATVTRQSARSSIQQR.

In terms of domain architecture, 4Fe-4S ferredoxin-type spans 2 to 29 (KVVVNERRCFGSGQCVLVAPEVFEQSND). [3Fe-4S] cluster contacts are provided by C10, C16, and C54. The interval 66 to 304 (MRQEPTEFSY…QSARSSIQQR (239 aa)) is transketolase-like.

In the C-terminal section; belongs to the transketolase family. It depends on [3Fe-4S] cluster as a cofactor.

In terms of biological role, plays a role in electron transfer. The fas operon encodes genes involved in cytokinin production and in host plant fasciation (leafy gall). The protein is Ferredoxin fas2 (fas2) of Rhodococcoides fascians (Rhodococcus fascians).